The chain runs to 106 residues: NADH dehydrogenase [ubiquinone] 1 beta subcomplex subunit 10-B (106 aa).

The disordered stretch occupies residues 1–25; it reads MGRKKGLPEFEESAPDGFDPENPYK.

The protein belongs to the complex I NDUFB10 subunit family. Complex I is composed of at least 49 different subunits.

The protein resides in the mitochondrion inner membrane. Its function is as follows. Accessory subunit of the mitochondrial membrane respiratory chain NADH dehydrogenase (Complex I), that is believed not to be involved in catalysis. Complex I functions in the transfer of electrons from NADH to the respiratory chain. The immediate electron acceptor for the enzyme is believed to be ubiquinone. The chain is NADH dehydrogenase [ubiquinone] 1 beta subcomplex subunit 10-B from Arabidopsis thaliana (Mouse-ear cress).